The following is a 257-amino-acid chain: Global transcriptional regulator CodY (257 aa).

The segment at 1–155 (MSLLSKTREL…AATVIGMEIL (155 aa)) is GAF domain. A DNA-binding region (H-T-H motif) is located at residues 203-222 (ASKVADRVGITRSVIVNALR).

Belongs to the CodY family.

The protein localises to the cytoplasm. Its function is as follows. DNA-binding global transcriptional regulator which is involved in the adaptive response to starvation and acts by directly or indirectly controlling the expression of numerous genes in response to nutrient availability. During rapid exponential growth, CodY is highly active and represses genes whose products allow adaptation to nutrient depletion. This is Global transcriptional regulator CodY from Staphylococcus saprophyticus subsp. saprophyticus (strain ATCC 15305 / DSM 20229 / NCIMB 8711 / NCTC 7292 / S-41).